Consider the following 303-residue polypeptide: N-acetyl-D-glucosamine kinase (303 aa).

ATP-binding positions include 4 to 11 (GFDIGGTK) and 133 to 140 (GVGGGLVL). The Zn(2+) site is built by H157, C177, C179, and C184.

This sequence belongs to the ROK (NagC/XylR) family. NagK subfamily.

It catalyses the reaction N-acetyl-D-glucosamine + ATP = N-acetyl-D-glucosamine 6-phosphate + ADP + H(+). It functions in the pathway cell wall biogenesis; peptidoglycan recycling. Catalyzes the phosphorylation of N-acetyl-D-glucosamine (GlcNAc) derived from cell-wall degradation, yielding GlcNAc-6-P. This Salmonella heidelberg (strain SL476) protein is N-acetyl-D-glucosamine kinase.